A 321-amino-acid chain; its full sequence is Sideroflexin-1-3 (321 aa).

5 consecutive transmembrane segments (helical) span residues 101–121 (IITG…FWQW), 146–168 (LVTS…NHAV), 174–194 (LLGR…NIPC), 220–240 (AAVV…IPGM), and 266–286 (IQTL…CAFF).

This sequence belongs to the sideroflexin family.

It is found in the mitochondrion membrane. In terms of biological role, mitochondrial amino-acid transporter that mediates transport of serine into mitochondria. This chain is Sideroflexin-1-3, found in Drosophila melanogaster (Fruit fly).